The following is a 211-amino-acid chain: Transcriptional regulator GfcR (211 aa).

This sequence belongs to the purine/pyrimidine phosphoribosyltransferase family. GfcR subfamily.

The polypeptide is Transcriptional regulator GfcR (Methanocaldococcus jannaschii (strain ATCC 43067 / DSM 2661 / JAL-1 / JCM 10045 / NBRC 100440) (Methanococcus jannaschii)).